A 314-amino-acid polypeptide reads, in one-letter code: Malate dehydrogenase (314 aa).

NAD(+) contacts are provided by residues G7–G12 and D32. Substrate contacts are provided by R81 and R87. Residues N94 and V117–N119 contribute to the NAD(+) site. The substrate site is built by N119 and R150. Residue H174 is the Proton acceptor of the active site.

This sequence belongs to the LDH/MDH superfamily. MDH type 3 family.

The enzyme catalyses (S)-malate + NAD(+) = oxaloacetate + NADH + H(+). Functionally, catalyzes the reversible oxidation of malate to oxaloacetate. The sequence is that of Malate dehydrogenase from Salinibacter ruber (strain DSM 13855 / M31).